The primary structure comprises 149 residues: Protein AIM7 (149 aa).

Serine 2 is subject to N-acetylserine. The ADF-H domain maps to 3 to 147 (NLYKIGTETR…DVEELREQLE (145 aa)). The residue at position 137 (serine 137) is a Phosphoserine.

Belongs to the actin-binding proteins ADF family. GMF subfamily.

Its subcellular location is the cytoplasm. The protein localises to the nucleus. In terms of biological role, may be involved in mitochondrial organization and biogenesis. In Saccharomyces cerevisiae (strain ATCC 204508 / S288c) (Baker's yeast), this protein is Protein AIM7 (AIM7).